Here is a 165-residue protein sequence, read N- to C-terminus: MQLFSILSLLSSLMCSLTVLGSSASSYVKFPVQKFADIINIGTQDVSTVFKRNEVLNTTVINGIGVYVVKMEIGTPPQTVYLQLDTGSSDMIVNNADIAYCKSMSDGSDYASTDNYELTATFTGPRSTTTSPELITLSALIGVNSMQETHLLLRITRLSSMTYTY.

A signal peptide spans 1–24 (MQLFSILSLLSSLMCSLTVLGSSA). N-linked (GlcNAc...) asparagine glycosylation occurs at N57. The Peptidase A1 domain occupies 67 to 165 (YVVKMEIGTP…TRLSSMTYTY (99 aa)).

It belongs to the peptidase A1 family.

The protein is Yapsin-5 (YPS5) of Saccharomyces cerevisiae (strain ATCC 204508 / S288c) (Baker's yeast).